Consider the following 732-residue polypeptide: MHKFLALGLLPYLLGLLNSTRLTFIGNDESDTAIALTQIVRGLQQSSLAILALPSLALSDGVCQKERNVYLDDFLQRLHRSNYKSVVFSQTELFFQHIEENLQGANECISLILDEPNQLLNSLHDRHLGHRLSLFIFYWGARWPPSSRVIRFREPLRVVVVTRPRKKAFRIYYNQARPCSDSQLQLVNWYDGDNLGLQRIPLLPTALSVYANFKGRTFRVPVFHSPPWFWVTYCNNSFEEDEEFNSLDSIEKRKVRVTGGRDHRLLMLLSKHMNFRFKYIEAPGRTQGSMRSEDGKDSNDSFTGGIGLLQSGQADFFLGDVGLSWERRKAIEFSFFTLADSGAFATHAPRRLNEALAIMRPFKQDIWPHLILTIIFSGPIFYGIIALPYIWRRRWANSDVEHLGELYIHMTYLKEITPRLLKLKPRTVLSAHQMPHQLFQKCIWFTLRLFLKQSCNELHNGYRAKFLTIVYWIAATYVLADVYSAQLTSQFARPAREPPINTLQRLQAAMIHDGYRLYVEKESSSLEMLENGTELFRQLYALMRQQVINDPQGFFIDSVEAGIKLIAEGGEDKAVLGGRETLFFNVQQYGSNNFQLSQKLYTRYSAVAVQIGCPFLGSLNNVLMQLFESGILDKMTAAEYAKQYQEVEATRIYKGSVQAKNSEAYSRTESYDSTVISPLNLRMLQGAFIALGVGSLAAGVILLLEIVFIKLDQARLWMLCSRLQWIRYDRKV.

The first 19 residues, 1–19 (MHKFLALGLLPYLLGLLNS), serve as a signal peptide directing secretion. Residues asparagine 18, asparagine 235, and asparagine 299 are each glycosylated (N-linked (GlcNAc...) asparagine). Residues 20 to 369 (TRLTFIGNDE…RPFKQDIWPH (350 aa)) are Extracellular-facing. A helical membrane pass occupies residues 370-390 (LILTIIFSGPIFYGIIALPYI). At 391–465 (WRRRWANSDV…NELHNGYRAK (75 aa)) the chain is on the cytoplasmic side. A helical transmembrane segment spans residues 466 to 486 (FLTIVYWIAATYVLADVYSAQ). The Extracellular portion of the chain corresponds to 487–688 (LTSQFARPAR…LNLRMLQGAF (202 aa)). Asparagine 531 carries an N-linked (GlcNAc...) asparagine glycan. The chain crosses the membrane as a helical span at residues 689–709 (IALGVGSLAAGVILLLEIVFI). The Cytoplasmic portion of the chain corresponds to 710-732 (KLDQARLWMLCSRLQWIRYDRKV).

It belongs to the glutamate-gated ion channel (TC 1.A.10.1) family. In the antenna, detected in sacculus neurons which innervate the first and second chambers (at protein level).

The protein localises to the cell membrane. Its function is as follows. Integral part of a neural sensory system in the antenna that provides the neural basis for the response to environmental changes in humidity (hygrosensation). Together with Ir25a and Ir93a, mediates the response of the hygrosensory sacculus neurons to changes in relative humidity and is required for dry detection behavior. This is Ionotropic receptor 40a from Drosophila melanogaster (Fruit fly).